A 419-amino-acid polypeptide reads, in one-letter code: Tyrosine--tRNA ligase (419 aa).

L-tyrosine is bound at residue Y34. A 'HIGH' region motif is present at residues 39–48 (PSGDSMHIGH). Y168 and Q172 together coordinate L-tyrosine. The 'KMSKS' region motif lies at 230–234 (KFGKS). Position 233 (K233) interacts with ATP. The S4 RNA-binding domain occupies 352 to 418 (VNLVDWLVSL…GKKKYFLVSY (67 aa)).

It belongs to the class-I aminoacyl-tRNA synthetase family. TyrS type 1 subfamily. In terms of assembly, homodimer.

The protein resides in the cytoplasm. It carries out the reaction tRNA(Tyr) + L-tyrosine + ATP = L-tyrosyl-tRNA(Tyr) + AMP + diphosphate + H(+). In terms of biological role, catalyzes the attachment of tyrosine to tRNA(Tyr) in a two-step reaction: tyrosine is first activated by ATP to form Tyr-AMP and then transferred to the acceptor end of tRNA(Tyr). This is Tyrosine--tRNA ligase from Listeria welshimeri serovar 6b (strain ATCC 35897 / DSM 20650 / CCUG 15529 / CIP 8149 / NCTC 11857 / SLCC 5334 / V8).